Reading from the N-terminus, the 33-residue chain is Dermaseptin DS VIII-like peptide (33 aa).

Residue Ala33 is modified to Alanine amide.

Expressed by the parotoid glands.

Its subcellular location is the secreted. In terms of biological role, possesses a potent antimicrobial activity against bacteria, fungi and protozoa. Probably acts by disturbing membrane functions with its amphipathic structure. The sequence is that of Dermaseptin DS VIII-like peptide from Phyllomedusa burmeisteri (Brazilian common walking leaf frog).